The following is a 204-amino-acid chain: Ribonuclease HII (204 aa).

In terms of domain architecture, RNase H type-2 spans 14-204; the sequence is QYICGVDEVG…SFKLSCLGEK (191 aa). The a divalent metal cation site is built by Asp-20, Glu-21, and Asp-116.

Belongs to the RNase HII family. The cofactor is Mn(2+). Mg(2+) is required as a cofactor.

It localises to the cytoplasm. The catalysed reaction is Endonucleolytic cleavage to 5'-phosphomonoester.. Functionally, endonuclease that specifically degrades the RNA of RNA-DNA hybrids. In Chloroherpeton thalassium (strain ATCC 35110 / GB-78), this protein is Ribonuclease HII.